The sequence spans 353 residues: Photosystem II D2 protein (353 aa).

At threonine 2 the chain carries N-acetylthreonine. Residue threonine 2 is modified to Phosphothreonine. The helical transmembrane segment at 41 to 61 (CAYFALGGWFTGTTFVTSWYT) threads the bilayer. Histidine 118 lines the chlorophyll a pocket. The helical transmembrane segment at 125 to 141 (GFMLRQFELARSVQLRP) threads the bilayer. Pheophytin a-binding residues include glutamine 130 and asparagine 143. The chain crosses the membrane as a helical span at residues 153 to 166 (VFVSVFLIYPLGQS). Histidine 198 serves as a coordination point for chlorophyll a. Residues 208 to 228 (AALLCAIHGATVENTLFEDGD) form a helical membrane-spanning segment. 2 residues coordinate a plastoquinone: histidine 215 and phenylalanine 262. Histidine 215 contributes to the Fe cation binding site. Histidine 269 lines the Fe cation pocket. The chain crosses the membrane as a helical span at residues 279 to 295 (GLWMSALGVVGLALNLR).

Belongs to the reaction center PufL/M/PsbA/D family. In terms of assembly, PSII is composed of 1 copy each of membrane proteins PsbA, PsbB, PsbC, PsbD, PsbE, PsbF, PsbH, PsbI, PsbJ, PsbK, PsbL, PsbM, PsbT, PsbX, PsbY, PsbZ, Psb30/Ycf12, at least 3 peripheral proteins of the oxygen-evolving complex and a large number of cofactors. It forms dimeric complexes. The D1/D2 heterodimer binds P680, chlorophylls that are the primary electron donor of PSII, and subsequent electron acceptors. It shares a non-heme iron and each subunit binds pheophytin, quinone, additional chlorophylls, carotenoids and lipids. There is also a Cl(-1) ion associated with D1 and D2, which is required for oxygen evolution. The PSII complex binds additional chlorophylls, carotenoids and specific lipids. is required as a cofactor.

The protein resides in the plastid. It localises to the chloroplast thylakoid membrane. The enzyme catalyses 2 a plastoquinone + 4 hnu + 2 H2O = 2 a plastoquinol + O2. Photosystem II (PSII) is a light-driven water:plastoquinone oxidoreductase that uses light energy to abstract electrons from H(2)O, generating O(2) and a proton gradient subsequently used for ATP formation. It consists of a core antenna complex that captures photons, and an electron transfer chain that converts photonic excitation into a charge separation. The D1/D2 (PsbA/PsbD) reaction center heterodimer binds P680, the primary electron donor of PSII as well as several subsequent electron acceptors. D2 is needed for assembly of a stable PSII complex. This is Photosystem II D2 protein from Aethionema grandiflorum (Persian stone-cress).